Reading from the N-terminus, the 145-residue chain is MKVLFNRLHSHDLPLPRYMTPGSSGLDLYAAVDEEILIPSGKIVLVPTGLALAIPEGYEAQIRPRSGLALKYGITLLNTPGTIDADYRGEIKVIVINLGDKDYILKRGERIAQMVFSRVEKAEFMEVKSLDETLRGAGGFGHTGI.

Residues 65 to 67 (RSG), Asn78, 82 to 84 (TID), and Lys92 contribute to the substrate site.

This sequence belongs to the dUTPase family. Mg(2+) is required as a cofactor.

The enzyme catalyses dUTP + H2O = dUMP + diphosphate + H(+). Its pathway is pyrimidine metabolism; dUMP biosynthesis; dUMP from dCTP (dUTP route): step 2/2. This enzyme is involved in nucleotide metabolism: it produces dUMP, the immediate precursor of thymidine nucleotides and it decreases the intracellular concentration of dUTP so that uracil cannot be incorporated into DNA. The polypeptide is Deoxyuridine 5'-triphosphate nucleotidohydrolase (Syntrophomonas wolfei subsp. wolfei (strain DSM 2245B / Goettingen)).